Reading from the N-terminus, the 738-residue chain is 1,4-alpha-glucan branching enzyme GlgB (738 aa).

Residue aspartate 399 is the Nucleophile of the active site. The active-site Proton donor is glutamate 452.

The protein belongs to the glycosyl hydrolase 13 family. GlgB subfamily. In terms of assembly, monomer.

The enzyme catalyses Transfers a segment of a (1-&gt;4)-alpha-D-glucan chain to a primary hydroxy group in a similar glucan chain.. Its pathway is glycan biosynthesis; glycogen biosynthesis. Its function is as follows. Catalyzes the formation of the alpha-1,6-glucosidic linkages in glycogen by scission of a 1,4-alpha-linked oligosaccharide from growing alpha-1,4-glucan chains and the subsequent attachment of the oligosaccharide to the alpha-1,6 position. The protein is 1,4-alpha-glucan branching enzyme GlgB of Chlamydia trachomatis serovar L2 (strain ATCC VR-902B / DSM 19102 / 434/Bu).